Reading from the N-terminus, the 449-residue chain is Tubulin beta-5 chain (449 aa).

GTP-binding residues include glutamine 11, glutamate 70, serine 139, glycine 143, threonine 144, glycine 145, asparagine 205, and asparagine 227. Glutamate 70 is a binding site for Mg(2+). The tract at residues 427-449 (QDATADEEGEYDVEEEEEGDYET) is disordered. Positions 430–449 (TADEEGEYDVEEEEEGDYET) are enriched in acidic residues.

Belongs to the tubulin family. In terms of assembly, dimer of alpha and beta chains. A typical microtubule is a hollow water-filled tube with an outer diameter of 25 nm and an inner diameter of 15 nM. Alpha-beta heterodimers associate head-to-tail to form protofilaments running lengthwise along the microtubule wall with the beta-tubulin subunit facing the microtubule plus end conferring a structural polarity. Microtubules usually have 13 protofilaments but different protofilament numbers can be found in some organisms and specialized cells. Mg(2+) is required as a cofactor.

Its subcellular location is the cytoplasm. It is found in the cytoskeleton. Functionally, tubulin is the major constituent of microtubules, a cylinder consisting of laterally associated linear protofilaments composed of alpha- and beta-tubulin heterodimers. Microtubules grow by the addition of GTP-tubulin dimers to the microtubule end, where a stabilizing cap forms. Below the cap, tubulin dimers are in GDP-bound state, owing to GTPase activity of alpha-tubulin. The protein is Tubulin beta-5 chain (TUBB5) of Arabidopsis thaliana (Mouse-ear cress).